A 233-amino-acid polypeptide reads, in one-letter code: Octanoyltransferase (233 aa).

In terms of domain architecture, BPL/LPL catalytic spans 36–211; it reads DTTPDEIWLV…EFTRQLGYPT (176 aa). Residues 75–82, 142–144, and 155–157 contribute to the substrate site; these read RGGQITYH, SLG, and GLA. Catalysis depends on Cys-173, which acts as the Acyl-thioester intermediate.

Belongs to the LipB family.

The protein resides in the cytoplasm. It carries out the reaction octanoyl-[ACP] + L-lysyl-[protein] = N(6)-octanoyl-L-lysyl-[protein] + holo-[ACP] + H(+). The protein operates within protein modification; protein lipoylation via endogenous pathway; protein N(6)-(lipoyl)lysine from octanoyl-[acyl-carrier-protein]: step 1/2. In terms of biological role, catalyzes the transfer of endogenously produced octanoic acid from octanoyl-acyl-carrier-protein onto the lipoyl domains of lipoate-dependent enzymes. Lipoyl-ACP can also act as a substrate although octanoyl-ACP is likely to be the physiological substrate. The chain is Octanoyltransferase from Yersinia pseudotuberculosis serotype O:1b (strain IP 31758).